The primary structure comprises 838 residues: Transient receptor potential cation channel subfamily V member 1 (838 aa).

Disordered regions lie at residues 1–63 and 86–109; these read MEQR…PLDC and RPGDGPASVRPSSQDSVSAGEKPP. The Cytoplasmic portion of the chain corresponds to 1 to 432; the sequence is MEQRASLDSE…QDKWDRFVKR (432 aa). One copy of the ANK 1 repeat lies at 110–138; it reads RLYDRRSIFDAVAQSNCQELESLLPFLQR. Arginine 115 contributes to the ATP binding site. Phosphoserine; by PKA and PKD is present on serine 116. A Phosphothreonine; by PKA; in vitro modification is found at threonine 144. The stretch at 153 to 185 is one ANK 2 repeat; it reads TGKTCLLKAMLNLHNGQNDTIALLLDVARKTDS. Residues lysine 155, lysine 160, asparagine 164, 199-202, and 210-211 contribute to the ATP site; these read YKGQ and ER. ANK repeat units lie at residues 203-228, 249-276, 285-321, and 335-358; these read TALHIAIERRNMTLVTLLVENGADVQ, ELPLSLAACTNQLAIVKFLLQNSWQPAD, NTVLHALVEVADNTVDNTKFVTSMYNEILILGAKLHP, and TPLALAASSGKIGVLAYILQREIH. Threonine 370 is modified (phosphothreonine; by PKA; in vitro). One copy of the ANK 7 repeat lies at 393–415; it reads NSVLEVIAYSSSETPNRHDMLLV. Residues 433 to 453 traverse the membrane as a helical segment; that stretch reads IFYFNFFVYCLYMIIFTAAAY. The Extracellular segment spans residues 454–471; that stretch reads YRPVEGLPPYKLKNTVGD. A helical membrane pass occupies residues 472 to 497; the sequence is YFRVTGEILSVSGGVYFFFRGIQYFL. Residues 498 to 510 lie on the Cytoplasmic side of the membrane; that stretch reads QRRPSLKSLFVDS. Serine 502 carries the post-translational modification Phosphoserine; by PKC/PRKCE. 511–512 contacts resiniferatoxin; sequence YS. Residues 511–531 traverse the membrane as a helical segment; the sequence is YSEILFFVQSLFMLVSVVLYF. The Extracellular segment spans residues 532–535; that stretch reads SQRK. Residues 536 to 556 form a helical membrane-spanning segment; the sequence is EYVASMVFSLAMGWTNMLYYT. Resiniferatoxin contacts are provided by threonine 550 and arginine 557. The Cytoplasmic portion of the chain corresponds to 557–571; it reads RGFQQMGIYAVMIEK. Residues 572-599 traverse the membrane as a helical segment; sequence MILRDLCRFMFVYLVFLFGFSTAVVTLI. Residues 600–626 lie on the Extracellular side of the membrane; that stretch reads EDGKNNSLPMESTPHKCRGSACKPGNS. An N-linked (GlcNAc...) asparagine glycan is attached at asparagine 604. The segment at residues 627–649 is an intramembrane region (pore-forming); it reads YNSLYSTCLELFKFTIGMGDLEF. Glycine 643 lines the Na(+) pocket. The Selectivity filter signature appears at 643-646; it reads GMGD. Aspartate 646 contributes to the Ca(2+) binding site. At 650-657 the chain is on the extracellular side; sequence TENYDFKA. A helical membrane pass occupies residues 658-686; it reads VFIILLLAYVILTYILLLNMLIALMGETV. The segment at 684 to 712 is AD; the sequence is ETVNKIAQESKNIWKLQRAITILDTEKSF. At 687-838 the chain is on the cytoplasmic side; the sequence is NKIAQESKNI…FKDSMVPGEK (152 aa). Threonine 704 carries the post-translational modification Phosphothreonine. Residues 767 to 801 are interaction with calmodulin; that stretch reads EGVKRTLSFSLRSGRVSGRNWKNFALVPLLRDAST. Serine 774 carries the phosphoserine; by PKA; in vitro modification. Residues 777–792 form a required for PIP2-mediated channel inhibition region; it reads LRSGRVSGRNWKNFAL. Residue serine 800 is modified to Phosphoserine; by PKC/PRKCE and PKC/PRKCZ. Serine 820 is modified (phosphoserine; by PKA; in vitro).

The protein belongs to the transient receptor (TC 1.A.4) family. TrpV subfamily. TRPV1 sub-subfamily. In terms of assembly, homotetramer. Interacts with PIRT. May also form a heteromeric channel with TRPV3. Interacts with CALM, PRKCM and CSK. Interacts with PRKCG and NTRK1, probably by forming a trimeric complex. Interacts with the Scolopendra mutilans RhTx toxin. Interacts with the spider Tau-theraphotoxin-Hs1a. Interacts with TMEM100. Interacts with PACS2. Post-translationally, phosphorylation by PKA reverses capsaicin-induced dephosphorylation at multiple sites, probably including Ser-116 as a major phosphorylation site. Phosphorylation by CAMKII seems to regulate binding to vanilloids. Phosphorylated and modulated by PRKCE, PRKCM and probably PRKCZ. Dephosphorylation by calcineurin seems to lead to receptor desensitization and phosphorylation by CAMKII recovers activity. In terms of tissue distribution, predominantly expressed in trigeminal and dorsal root sensory ganglia. Expressed also in hippocampus, cortex, cerebellum, olfactory bulb, mesencephalon and hindbrain. High expression in the cell bodies and dendrites of neurons in the hippocampus and in the cortex. In the brain detected also in astrocytes and pericytes (at protein level). Isoform 1 and isoform 3 are expressed in brain and peripheral blood mononuclear cells.

It is found in the postsynaptic cell membrane. Its subcellular location is the cell projection. The protein localises to the dendritic spine membrane. The protein resides in the cell membrane. It catalyses the reaction Ca(2+)(in) = Ca(2+)(out). The enzyme catalyses Mg(2+)(in) = Mg(2+)(out). It carries out the reaction Na(+)(in) = Na(+)(out). The catalysed reaction is K(+)(in) = K(+)(out). With respect to regulation, channel activity is activated via the interaction with PIRT and phosphatidylinositol 4,5-bisphosphate (PIP2). Both PIRT and PIP2 are required to activate channel activity. The channel is sensitized by ATP binding. Repeated stimulation with capsaicin gives rise to progressively smaller responses, due to desensitization. This desensitization is triggered by the influx of calcium ions and is inhibited by elevated ATP levels. Ca(2+) and CALM displace ATP from its binding site and trigger a conformation change that leads to a closed, desensitized channel. Intracellular PIP2 inhibits desensitization. The double-knot toxin (DkTx) from the Chinese earth tiger tarantula activates the channel and traps it in an open conformation. The Scolopendra mutilans RhTx toxin potentiates the heat activation pathway mediated by this channel by binding to the charge-rich outer pore region (in an activated state). In terms of biological role, non-selective calcium permeant cation channel involved in detection of noxious chemical and thermal stimuli. Seems to mediate proton influx and may be involved in intracellular acidosis in nociceptive neurons. Involved in mediation of inflammatory pain and hyperalgesia. Sensitized by a phosphatidylinositol second messenger system activated by receptor tyrosine kinases, which involves PKC isozymes and PCL. Activation by vanilloids, like capsaicin, and temperatures higher than 42 degrees Celsius. Upon activation, exhibits a time- and Ca(2+)-dependent outward rectification, followed by a long-lasting refractory state. Mild extracellular acidic pH (6.5) potentiates channel activation by noxious heat and vanilloids, whereas acidic conditions (pH &lt;6) directly activate the channel. Can be activated by endogenous compounds, including 12-hydroperoxytetraenoic acid and bradykinin. Acts as ionotropic endocannabinoid receptor with central neuromodulatory effects. Triggers a form of long-term depression (TRPV1-LTD) mediated by the endocannabinoid anandamine in the hippocampus and nucleus accumbens by affecting AMPA receptors endocytosis. Functionally, does not display channel activity in response to noxious chemical compounds, such as capsaicin and the vanilloid resiniferatoxin. Channel activity is not elicited by mildly acidic extracellular pH, and only slight channel activity is observed in response to noxiuos heat stimuli. This is Transient receptor potential cation channel subfamily V member 1 (Trpv1) from Rattus norvegicus (Rat).